We begin with the raw amino-acid sequence, 561 residues long: MIQAKEELLAALGLALAELVPGSDLAPAFENPKQAAHGDLAITAAMQLARPLRKNPRELAQALVEALGRQPAAQKWVDAMELAGPGFINLRLKPAARQQVVSAVLSQREGFGVRAPNGQRVMVEFVSANPTGPLHVGHGRQAALGDAICNVFATQGWAVHREFYYNDAGVQIGTLASSTQCRLRGLKPGDAEWPASAYNGDYIADIAREFLAGATVKADDRAFTASGEVEDIDSIRQFAVAYLRHEQDLDLQAFGVRFDHYYLESGLYSSGRVEEAVAKLTAAGKTFEEGGALWLRSTDYGDDKDRVMKKSDGTYTYFVPDVAYHIHKWERGFDKVINIQGSDHHGTIARVRAGLQAAGVGVPQGWPDYVLHKMVTVMKGGEEVKISKRAGSYVTLRDLIDWTSRDAVRFFLISRKADTEFVFDVDLALKANDENPVYYVQYAHARVCSVLARYVEEHQGDLATLADADLSLLAEPTEFALMNKLAEYPEMLGAAAADLAPHNVAFYLRDLAAHYHSYYGAVRFLDGAVEPMRARMALLEATAQVLRNALAVLGVSAPRKM.

The short motif at 128-138 is the 'HIGH' region element; it reads ANPTGPLHVGH.

The protein belongs to the class-I aminoacyl-tRNA synthetase family. As to quaternary structure, monomer.

It is found in the cytoplasm. It carries out the reaction tRNA(Arg) + L-arginine + ATP = L-arginyl-tRNA(Arg) + AMP + diphosphate. This is Arginine--tRNA ligase from Leptothrix cholodnii (strain ATCC 51168 / LMG 8142 / SP-6) (Leptothrix discophora (strain SP-6)).